The following is a 192-amino-acid chain: Succinate dehydrogenase cytochrome b560 subunit, mitochondrial (192 aa).

The transit peptide at 1 to 27 directs the protein to the mitochondrion; it reads MFGRTLNTFTSRNAPLVRNFDKFIVNN. The Mitochondrial matrix portion of the chain corresponds to 48–83; sequence YSTQAKKPFTITEKRIDELKTPYQPTSPHLTIYKFP. Residues 84–113 form a helical membrane-spanning segment; it reads LPAVMSIMHRATGICLALGITGLAGVTLFA. Residues 114–131 lie on the Mitochondrial intermembrane side of the membrane; sequence PHDAIHYIQLLHTQYPAL. A helical membrane pass occupies residues 132–156; it reads VYPAKFAVALPLTYHFCTGVRHIIW. H146 serves as a coordination point for heme b. Residues 157-164 lie on the Mitochondrial matrix side of the membrane; the sequence is DETVKGLS. Residues 165–186 traverse the membrane as a helical segment; that stretch reads ISQIESSGKVLLAVVAVLSTIF. Residues 187–189 are Mitochondrial intermembrane-facing; sequence TFV.

The protein belongs to the cytochrome b560 family. Component of complex II composed of four subunits: the flavoprotein (FP) sdha, iron-sulfur protein (IP) sdhb, and a cytochrome b560 composed of sdhc and sdhd. Heme b serves as cofactor.

The protein resides in the mitochondrion inner membrane. The protein operates within carbohydrate metabolism; tricarboxylic acid cycle. Membrane-anchoring subunit of succinate dehydrogenase (SDH) that is involved in complex II of the mitochondrial electron transport chain and is responsible for transferring electrons from succinate to ubiquinone (coenzyme Q). This is Succinate dehydrogenase cytochrome b560 subunit, mitochondrial (sdhC) from Dictyostelium discoideum (Social amoeba).